Consider the following 205-residue polypeptide: Protein GrpE (205 aa).

Residues Met1–Lys18 show a composition bias toward basic and acidic residues. Residues Met1–Lys60 are disordered. Polar residues predominate over residues Asp19–Gln35. The span at Glu36–Glu47 shows a compositional bias: basic and acidic residues.

This sequence belongs to the GrpE family. In terms of assembly, homodimer.

The protein resides in the cytoplasm. In terms of biological role, participates actively in the response to hyperosmotic and heat shock by preventing the aggregation of stress-denatured proteins, in association with DnaK and GrpE. It is the nucleotide exchange factor for DnaK and may function as a thermosensor. Unfolded proteins bind initially to DnaJ; upon interaction with the DnaJ-bound protein, DnaK hydrolyzes its bound ATP, resulting in the formation of a stable complex. GrpE releases ADP from DnaK; ATP binding to DnaK triggers the release of the substrate protein, thus completing the reaction cycle. Several rounds of ATP-dependent interactions between DnaJ, DnaK and GrpE are required for fully efficient folding. The polypeptide is Protein GrpE (Chloroherpeton thalassium (strain ATCC 35110 / GB-78)).